Reading from the N-terminus, the 43-residue chain is Potassium channel toxin gamma-KTx 4.1 (43 aa).

Cystine bridges form between Cys-5-Cys-23, Cys-11-Cys-34, Cys-20-Cys-39, and Cys-24-Cys-41.

This sequence belongs to the ergtoxin family. Gamma-KTx 4 subfamily. Expressed by the venom gland.

It localises to the secreted. Reversibly blocks Kv11/ERG potassium channels. The sequence is that of Potassium channel toxin gamma-KTx 4.1 from Centruroides limpidus (Mexican scorpion).